A 154-amino-acid polypeptide reads, in one-letter code: Interleukin-2 (154 aa).

Residues 1–20 form the signal peptide; the sequence is MYRMQLLSCIALSLALVTNS. Thr23 carries an O-linked (GalNAc...) threonine glycan. The cysteines at positions 78 and 126 are disulfide-linked.

The protein belongs to the IL-2 family.

It localises to the secreted. Cytokine produced by activated CD4-positive helper T-cells and to a lesser extend activated CD8-positive T-cells and natural killer (NK) cells that plays pivotal roles in the immune response and tolerance. Binds to a receptor complex composed of either the high-affinity trimeric IL-2R (IL2RA/CD25, IL2RB/CD122 and IL2RG/CD132) or the low-affinity dimeric IL-2R (IL2RB and IL2RG). Interaction with the receptor leads to oligomerization and conformation changes in the IL-2R subunits resulting in downstream signaling starting with phosphorylation of JAK1 and JAK3. In turn, JAK1 and JAK3 phosphorylate the receptor to form a docking site leading to the phosphorylation of several substrates including STAT5. This process leads to activation of several pathways including STAT, phosphoinositide-3-kinase/PI3K and mitogen-activated protein kinase/MAPK pathways. Functions as a T-cell growth factor and can increase NK-cell cytolytic activity as well. Promotes strong proliferation of activated B-cells and subsequently immunoglobulin production. Plays a pivotal role in regulating the adaptive immune system by controlling the survival and proliferation of regulatory T-cells, which are required for the maintenance of immune tolerance. Moreover, participates in the differentiation and homeostasis of effector T-cell subsets, including Th1, Th2, Th17 as well as memory CD8-positive T-cells. This chain is Interleukin-2 (IL2), found in Cercocebus atys (Sooty mangabey).